The chain runs to 173 residues: Ribosome maturation factor RimM (173 aa).

The PRC barrel domain occupies E78 to E157. The tract at residues P152–P173 is disordered.

It belongs to the RimM family. As to quaternary structure, binds ribosomal protein uS19.

The protein localises to the cytoplasm. Its function is as follows. An accessory protein needed during the final step in the assembly of 30S ribosomal subunit, possibly for assembly of the head region. Essential for efficient processing of 16S rRNA. May be needed both before and after RbfA during the maturation of 16S rRNA. It has affinity for free ribosomal 30S subunits but not for 70S ribosomes. This is Ribosome maturation factor RimM from Beijerinckia indica subsp. indica (strain ATCC 9039 / DSM 1715 / NCIMB 8712).